Consider the following 210-residue polypeptide: ATP-dependent Clp protease proteolytic subunit (210 aa).

The active-site Nucleophile is S107. Residue H132 is part of the active site.

The protein belongs to the peptidase S14 family. Fourteen ClpP subunits assemble into 2 heptameric rings which stack back to back to give a disk-like structure with a central cavity, resembling the structure of eukaryotic proteasomes.

It localises to the cytoplasm. The enzyme catalyses Hydrolysis of proteins to small peptides in the presence of ATP and magnesium. alpha-casein is the usual test substrate. In the absence of ATP, only oligopeptides shorter than five residues are hydrolyzed (such as succinyl-Leu-Tyr-|-NHMec, and Leu-Tyr-Leu-|-Tyr-Trp, in which cleavage of the -Tyr-|-Leu- and -Tyr-|-Trp bonds also occurs).. Functionally, cleaves peptides in various proteins in a process that requires ATP hydrolysis. Has a chymotrypsin-like activity. Plays a major role in the degradation of misfolded proteins. This is ATP-dependent Clp protease proteolytic subunit from Azorhizobium caulinodans (strain ATCC 43989 / DSM 5975 / JCM 20966 / LMG 6465 / NBRC 14845 / NCIMB 13405 / ORS 571).